A 79-amino-acid polypeptide reads, in one-letter code: UPF0181 protein PC1_1931 (79 aa).

The disordered stretch occupies residues 54-79 (FDEDDDTVNDSDEEHYFDDGEEEDEQ).

The protein belongs to the UPF0181 family.

The chain is UPF0181 protein PC1_1931 from Pectobacterium carotovorum subsp. carotovorum (strain PC1).